Here is a 126-residue protein sequence, read N- to C-terminus: Non-specific lipid-transfer protein 15 (126 aa).

An N-terminal signal peptide occupies residues 1-22 (MSKSIFVVCITLLVVLSPTLNA). 4 disulfides stabilise this stretch: C34–C80, C45–C57, C58–C100, and C78–C114.

It belongs to the plant LTP family.

Plant non-specific lipid-transfer proteins transfer phospholipids as well as galactolipids across membranes. May play a role in wax or cutin deposition in the cell walls of expanding epidermal cells and certain secretory tissues. The sequence is that of Non-specific lipid-transfer protein 15 (LTP15) from Arabidopsis thaliana (Mouse-ear cress).